The sequence spans 114 residues: Nascent polypeptide-associated complex protein (114 aa).

An NAC-A/B domain is found at 5 to 69 (PSQFKNLERM…AKEAQKEEPK (65 aa)).

It belongs to the NAC-alpha family. In terms of assembly, homodimer. Interacts with the ribosome. Binds ribosomal RNA.

Functionally, contacts the emerging nascent chain on the ribosome. The chain is Nascent polypeptide-associated complex protein from Sulfurisphaera tokodaii (strain DSM 16993 / JCM 10545 / NBRC 100140 / 7) (Sulfolobus tokodaii).